Consider the following 529-residue polypeptide: Bifunctional purine biosynthesis protein PurH (529 aa).

In terms of domain architecture, MGS-like spans 1–148; that stretch reads MQQRRPVRRA…KNHRDVAIVV (148 aa). Lys287 carries the N6-acetyllysine modification.

The protein belongs to the PurH family.

The enzyme catalyses (6R)-10-formyltetrahydrofolate + 5-amino-1-(5-phospho-beta-D-ribosyl)imidazole-4-carboxamide = 5-formamido-1-(5-phospho-D-ribosyl)imidazole-4-carboxamide + (6S)-5,6,7,8-tetrahydrofolate. The catalysed reaction is IMP + H2O = 5-formamido-1-(5-phospho-D-ribosyl)imidazole-4-carboxamide. It participates in purine metabolism; IMP biosynthesis via de novo pathway; 5-formamido-1-(5-phospho-D-ribosyl)imidazole-4-carboxamide from 5-amino-1-(5-phospho-D-ribosyl)imidazole-4-carboxamide (10-formyl THF route): step 1/1. The protein operates within purine metabolism; IMP biosynthesis via de novo pathway; IMP from 5-formamido-1-(5-phospho-D-ribosyl)imidazole-4-carboxamide: step 1/1. This chain is Bifunctional purine biosynthesis protein PurH, found in Escherichia coli O6:K15:H31 (strain 536 / UPEC).